We begin with the raw amino-acid sequence, 460 residues long: Cobyrinate a,c-diamide synthase (460 aa).

In terms of domain architecture, GATase cobBQ-type spans Lys248–Lys440. Cys331 acts as the Nucleophile in catalysis.

It belongs to the CobB/CbiA family. Mg(2+) is required as a cofactor.

The enzyme catalyses cob(II)yrinate + 2 L-glutamine + 2 ATP + 2 H2O = cob(II)yrinate a,c diamide + 2 L-glutamate + 2 ADP + 2 phosphate + 2 H(+). It participates in cofactor biosynthesis; adenosylcobalamin biosynthesis; cob(II)yrinate a,c-diamide from sirohydrochlorin (anaerobic route): step 10/10. In terms of biological role, catalyzes the ATP-dependent amidation of the two carboxylate groups at positions a and c of cobyrinate, using either L-glutamine or ammonia as the nitrogen source. The protein is Cobyrinate a,c-diamide synthase of Priestia megaterium (Bacillus megaterium).